The following is a 360-amino-acid chain: Heat-inducible transcription repressor HrcA (360 aa).

Belongs to the HrcA family.

Its function is as follows. Negative regulator of class I heat shock genes (grpE-dnaK-dnaJ and groELS operons). Prevents heat-shock induction of these operons. The protein is Heat-inducible transcription repressor HrcA of Mesorhizobium japonicum (strain LMG 29417 / CECT 9101 / MAFF 303099) (Mesorhizobium loti (strain MAFF 303099)).